Reading from the N-terminus, the 362-residue chain is sn-glycerol-3-phosphate import ATP-binding protein UgpC (362 aa).

One can recognise an ABC transporter domain in the interval 4–235; it reads LSFRNVKKTY…PASTFVAGFI (232 aa). Residue 37 to 44 coordinates ATP; it reads GPSGCGKS.

This sequence belongs to the ABC transporter superfamily. sn-glycerol-3-phosphate importer (TC 3.A.1.1.3) family. The complex is composed of two ATP-binding proteins (UgpC), two transmembrane proteins (UgpA and UgpE) and a solute-binding protein (UgpB).

It localises to the cell inner membrane. It catalyses the reaction sn-glycerol 3-phosphate(out) + ATP + H2O = sn-glycerol 3-phosphate(in) + ADP + phosphate + H(+). Functionally, part of the ABC transporter complex UgpBAEC involved in sn-glycerol-3-phosphate (G3P) import. Responsible for energy coupling to the transport system. The sequence is that of sn-glycerol-3-phosphate import ATP-binding protein UgpC from Bordetella parapertussis (strain 12822 / ATCC BAA-587 / NCTC 13253).